The primary structure comprises 270 residues: ATP synthase subunit a (270 aa).

5 helical membrane-spanning segments follow: residues Val38–Tyr58, Ile98–Val118, Asp143–Ile163, Leu208–Trp228, and Ala239–Val259.

The protein belongs to the ATPase A chain family. As to quaternary structure, F-type ATPases have 2 components, CF(1) - the catalytic core - and CF(0) - the membrane proton channel. CF(1) has five subunits: alpha(3), beta(3), gamma(1), delta(1), epsilon(1). CF(0) has three main subunits: a(1), b(2) and c(9-12). The alpha and beta chains form an alternating ring which encloses part of the gamma chain. CF(1) is attached to CF(0) by a central stalk formed by the gamma and epsilon chains, while a peripheral stalk is formed by the delta and b chains.

Its subcellular location is the cell inner membrane. Key component of the proton channel; it plays a direct role in the translocation of protons across the membrane. This Vibrio alginolyticus protein is ATP synthase subunit a.